A 531-amino-acid polypeptide reads, in one-letter code: SWI/SNF-related matrix-associated actin-dependent regulator of chromatin subfamily D member 2 (531 aa).

Residues 20-85 are disordered; sequence AVAAALGAPP…MSPGSRMPMA (66 aa). Low complexity predominate over residues 34–45; that stretch reads PGMLPNPALRGP. 2 positions are modified to asymmetric dimethylarginine: R81 and R104. The segment at 202–226 is disordered; sequence FSPSKADGDNSGTAGTPGGTPAADK. S203 is subject to Phosphoserine. T217 carries the phosphothreonine modification. K226 is covalently cross-linked (Glycyl lysine isopeptide (Lys-Gly) (interchain with G-Cter in SUMO2)). Positions 306–383 constitute an SWIB/MDM2 domain; that stretch reads HQPPQYKLDP…PMKLAGLLQH (78 aa).

The protein belongs to the SMARCD family. Component of the multiprotein chromatin-remodeling complexes SWI/SNF: SWI/SNF-A (BAF), SWI/SNF-B (PBAF) and related complexes. The canonical complex contains a catalytic subunit (either SMARCA4/BRG1/BAF190A or SMARCA2/BRM/BAF190B), and at least SMARCE1, ACTL6A/BAF53, SMARCC1/BAF155, SMARCC2/BAF170, and SMARCB1/SNF5/BAF47. Other subunits specific to each of the complexes may also be present permitting several possible combinations developmentally and tissue specific. Component of the BAF complex, which includes at least actin (ACTB), ARID1A/BAF250A, ARID1B/BAF250B, SMARCA2/BRM, SMARCA4/BRG1, ACTL6A/BAF53, ACTL6B/BAF53B, SMARCE1/BAF57, SMARCC1/BAF155, SMARCC2/BAF170, SMARCB1/SNF5/INI1, and one or more SMARCD1/BAF60A, SMARCD2/BAF60B, or SMARCD3/BAF60C. In muscle cells, the BAF complex also contains DPF3. Component of the SWI/SNF-B (PBAF) chromatin remodeling complex, at least composed of SMARCA4/BRG1, SMARCB1/BAF47/SNF5, ACTL6A/BAF53A or ACTL6B/BAF53B, SMARCE1/BAF57, SMARCD1/BAF60A, SMARCD2/BAF60B, perhaps SMARCD3/BAF60C, SMARCC1/BAF155, SMARCC2/BAF170, PBRM1/BAF180, ARID2/BAF200 and actin (ACTB). Interacts with UNKL. Interacts with CEBPE. Ubiquitinated through a signaling process involving RAC1 and the RING finger protein UNKL.

The protein resides in the nucleus. Functionally, involved in transcriptional activation and repression of select genes by chromatin remodeling (alteration of DNA-nucleosome topology). Component of SWI/SNF chromatin remodeling complexes that carry out key enzymatic activities, changing chromatin structure by altering DNA-histone contacts within a nucleosome in an ATP-dependent manner. Critical regulator of myeloid differentiation, controlling granulocytopoiesis and the expression of genes involved in neutrophil granule formation. The protein is SWI/SNF-related matrix-associated actin-dependent regulator of chromatin subfamily D member 2 (Smarcd2) of Rattus norvegicus (Rat).